The chain runs to 289 residues: Protein shisa-2 homolog (289 aa).

The signal sequence occupies residues 1 to 27 (MWAGCHPDAASLLRLLLAALLAAGALA). Residues 28–104 (SGEYCHGWLD…RADKDGPDGS (77 aa)) are Extracellular-facing. The segment at 81–102 (GCDNDRQQGAGEPGRADKDGPD) is disordered. The helical transmembrane segment at 105-125 (AVPIYVPFLIVGSVFVAFIVL) threads the bilayer. Residues 126–289 (GSLVAACCCR…EQKMYPAVTV (164 aa)) lie on the Cytoplasmic side of the membrane. A disordered region spans residues 162–198 (PSASTSRGSSSRQSSTAASSSSSANSGARAPPTRSQT). The segment covering 163 to 191 (SASTSRGSSSRQSSTAASSSSSANSGARA) has biased composition (low complexity).

Belongs to the shisa family.

Its subcellular location is the endoplasmic reticulum membrane. Functionally, plays an essential role in the maturation of presomitic mesoderm cells by individual attenuation of both FGF and WNT signaling. The chain is Protein shisa-2 homolog (SHISA2) from Bos taurus (Bovine).